A 586-amino-acid polypeptide reads, in one-letter code: Kelch-like protein 7 (586 aa).

One can recognise a BTB domain in the interval 44–111 (CDVILTVQER…AYTARISVNS (68 aa)). Residues 146–248 (CLGISVLAEC…SKNFLSKTVQ (103 aa)) form the BACK domain. Kelch repeat units follow at residues 294-336 (RIAL…FWDN), 337-382 (VVYI…AAEG), 383-430 (KIYT…EANG), 431-481 (LIYV…FVKD), 483-528 (IFAV…AVGS), and 530-575 (IYVL…CVVD).

As to quaternary structure, homodimer. Component of the BCR(KLHL7) E3 ubiquitin ligase complex, at least composed of CUL3 and KLHL7 and RBX1.

Its subcellular location is the nucleus. It localises to the cytoplasm. It participates in protein modification; protein ubiquitination. Its function is as follows. Substrate-specific adapter of a BCR (BTB-CUL3-RBX1) E3 ubiquitin ligase complex. The BCR(KLHL7) complex acts by mediating ubiquitination and subsequent degradation of substrate proteins. Probably mediates 'Lys-48'-linked ubiquitination. The protein is Kelch-like protein 7 (Klhl7) of Mus musculus (Mouse).